The primary structure comprises 101 residues: NAD(P)H-quinone oxidoreductase subunit 4L, chloroplastic (101 aa).

3 helical membrane-spanning segments follow: residues 2 to 22, 32 to 52, and 61 to 81; these read ILEH…YGLI, MCLE…SDFF, and IFSI…LAIV.

It belongs to the complex I subunit 4L family. As to quaternary structure, NDH is composed of at least 16 different subunits, 5 of which are encoded in the nucleus.

Its subcellular location is the plastid. The protein localises to the chloroplast thylakoid membrane. It carries out the reaction a plastoquinone + NADH + (n+1) H(+)(in) = a plastoquinol + NAD(+) + n H(+)(out). The enzyme catalyses a plastoquinone + NADPH + (n+1) H(+)(in) = a plastoquinol + NADP(+) + n H(+)(out). In terms of biological role, NDH shuttles electrons from NAD(P)H:plastoquinone, via FMN and iron-sulfur (Fe-S) centers, to quinones in the photosynthetic chain and possibly in a chloroplast respiratory chain. The immediate electron acceptor for the enzyme in this species is believed to be plastoquinone. Couples the redox reaction to proton translocation, and thus conserves the redox energy in a proton gradient. This chain is NAD(P)H-quinone oxidoreductase subunit 4L, chloroplastic, found in Oenothera argillicola (Appalachian evening primrose).